The chain runs to 682 residues: MSRSQNEEFQQWWNKQRDRNNHDVLYAGDDEAFLTVEIRTPATVDPDKDRIRTRTVRQLSRLYLLKFKQLASSFLWIGNSFLYLVRTANRRIANDNPPSVSSSARLYRLIKGFLVVVVLLLCFELAAYFKGWHFTPPSVASAEVAVEVVYAWWLEIRASYLAPPLQSLTNVCIVLFLIQSVDRLVLVLGCFWIKLRRIKPVASMEYPTKLVGEGVRLEDYPMVIVQIPMCNEKEVYQQSIGAVCMLDWPRERMLVQVLDDSSELDVQQLIKAEVQKWQQRGVRIVYRHRLIRTGYKAGNLKAAMNCEYVKDYEFVAIFDADFQPPADFLKKTVPHFKGNEELALVQTRWAFVNKDENLLTRLQNINLSFHFEVEQQVNGVFINFFGFNGTAGVWRIKALEDCGGWLERTTVEDMDIAVRAHLCGWKFIYLNDVKCLCELPESYEAYKKQQYRWHSGPMQLFRLCFFDILRSKVSAAKKANMIFLFFLLRKLILPFYSFTLFCVILPLTMFFPEANLPSWVVCYIPGIMSILNIIPAPRSFPFIVPYLLFENTMSVTKFGAMISGLFKFDSSYEWVVTKKLGRSSEADLVAYAESGSLVESTTIQRSSSDSGLTELSKLGAAKKAGKTKRNRLYRTEIALAFILLAASVRSLLSAQGIHFYFLLFQGITFVIVGLDLIGEQVS.

The next 2 helical transmembrane spans lie at 109–129 (LIKG…AAYF) and 173–193 (IVLF…CFWI). Residue D260 is part of the active site. The substrate site is built by D319 and D321. Residue D413 is part of the active site. 2 helical membrane-spanning segments follow: residues 491–511 (LILP…TMFF) and 516–536 (LPSW…IIPA). A Phosphoserine modification is found at S608. The next 2 membrane-spanning stretches (helical) occupy residues 632–651 (LYRT…VRSL) and 657–677 (IHFY…LDLI).

It belongs to the glycosyltransferase 2 family. Plant cellulose synthase-like C subfamily. As to quaternary structure, homodimer. In terms of tissue distribution, mainly expressed in flowers and seeds, and, to a lower extent, in seedlings, roots, leaves and stems.

Its subcellular location is the golgi apparatus membrane. Functionally, probable beta-1,4-glucan synthase rather involved in the synthesis of the xyloglucan backbone than cellulose. Seems to work simultaneously with xyloglucan 6-xylosyltransferase. Xyloglucan is a noncellulosic polysaccharides of plant cell wall and consists of a glucan backbone substituted by xylose, galactose and fucose. The chain is Probable xyloglucan glycosyltransferase 6 from Arabidopsis thaliana (Mouse-ear cress).